We begin with the raw amino-acid sequence, 337 residues long: Transcription initiation factor IIB (337 aa).

The segment at 36–68 (SVQSVCPECGSRQLVHDYERAELVCQNCGLVLD) adopts a TFIIB-type zinc-finger fold. Zn(2+) contacts are provided by Cys41, Cys44, Cys60, and Cys63. 2 tandem repeats follow at residues 154 to 237 (SELD…SREL) and 248 to 329 (DYVP…ELAE).

Belongs to the TFIIB family.

Functionally, stabilizes TBP binding to an archaeal box-A promoter. Also responsible for recruiting RNA polymerase II to the pre-initiation complex (DNA-TBP-TFIIB). This is Transcription initiation factor IIB from Methanoculleus marisnigri (strain ATCC 35101 / DSM 1498 / JR1).